Consider the following 514-residue polypeptide: 2,3-bisphosphoglycerate-independent phosphoglycerate mutase (514 aa).

Residues Asp-15 and Ser-65 each coordinate Mn(2+). The Phosphoserine intermediate role is filled by Ser-65. Residues His-126, 156–157 (RD), Arg-188, Arg-194, 261–264 (RADR), and Lys-335 each bind substrate. Mn(2+) contacts are provided by Asp-403, His-407, Asp-444, His-445, and His-462.

Belongs to the BPG-independent phosphoglycerate mutase family. In terms of assembly, monomer. Mn(2+) serves as cofactor.

It catalyses the reaction (2R)-2-phosphoglycerate = (2R)-3-phosphoglycerate. Its pathway is carbohydrate degradation; glycolysis; pyruvate from D-glyceraldehyde 3-phosphate: step 3/5. Its function is as follows. Catalyzes the interconversion of 2-phosphoglycerate and 3-phosphoglycerate. This chain is 2,3-bisphosphoglycerate-independent phosphoglycerate mutase, found in Syntrophotalea carbinolica (strain DSM 2380 / NBRC 103641 / GraBd1) (Pelobacter carbinolicus).